The sequence spans 1776 residues: Signal-induced proliferation-associated 1-like protein 3 (1776 aa).

Disordered regions lie at residues 41 to 157 (AQNG…GRAF) and 240 to 325 (PGAL…EASR). Residues 54-69 (PAATTTRPSPTTPAMP) show a composition bias toward low complexity. Polar residues-rich tracts occupy residues 89-99 (EQSNPSPSQDT) and 112-129 (RNLQ…SSGS). Serine 94 carries the post-translational modification Phosphoserine. The segment covering 131–140 (AFHRLSRRRS) has biased composition (basic residues). Residue serine 140 is modified to Phosphoserine. Residues 257–268 (GQPTKDSLQSLQ) show a composition bias toward polar residues. At serine 394 the chain carries Phosphoserine. Residues 438-461 (SRASVGSPGGSSEAHMAEPTLSTH) form a disordered region. Residues 605–822 (LLKLDEQGLC…RTRQEYLKDL (218 aa)) enclose the Rap-GAP domain. Positions 960–1024 (DMTLRRNGLG…DQMIDLLRTS (65 aa)) constitute a PDZ domain. Disordered stretches follow at residues 1040–1104 (PRRG…AQSL), 1117–1164 (RESQ…ATYA), and 1184–1632 (DPHF…LDPG). Composition is skewed to polar residues over residues 1074–1104 (APWQ…AQSL) and 1151–1160 (PSGSFSTPGS). Positions 1190–1201 (DGMSSGDSSSGG) are enriched in low complexity. Residues 1239–1255 (SRQDAAGKDSPNRHSKG) show a composition bias toward basic and acidic residues. Low complexity predominate over residues 1260 to 1275 (SSHSSSNTLSSNASSS). Positions 1298-1316 (GGSSDSGIDTTLYTSSPSC) are enriched in polar residues. Over residues 1344–1357 (SAGRPHPVDRRREV) the composition is skewed to basic and acidic residues. At serine 1358 the chain carries Phosphoserine. Position 1381 is a phosphothreonine (threonine 1381). Residues 1409 to 1436 (VYKTASAETPRPSQLSQCSPFQLSTSVP) are compositionally biased toward polar residues. Residue lysine 1442 is modified to N6-acetyllysine. A compositionally biased stretch (basic and acidic residues) spans 1503 to 1512 (TIEDDLKKLI). Polar residues-rich tracts occupy residues 1526-1541 (GQSP…SDES) and 1566-1578 (LFTS…SSTL). Serine 1538 and serine 1541 each carry phosphoserine. A compositionally biased stretch (low complexity) spans 1589–1601 (PPSGAPSTTPATG). A phosphoserine mark is found at serine 1614 and serine 1617. Residues 1620-1630 (DGRDRPLRRLD) show a composition bias toward basic and acidic residues. Position 1672 is a phosphoserine (serine 1672). Residues 1678 to 1705 (AHSPVHSHLSLERGPQTPRATPTMSEES) are disordered. Phosphothreonine occurs at positions 1694 and 1698. Residues 1715-1769 (QLEVMLKQLHTDLQKEKQDKVVLQSEVASLRQNNQRLQEESQAASEQLRKFAELF) adopt a coiled-coil conformation.

The protein localises to the apical cell membrane. In terms of biological role, plays a critical role in epithelial cell morphogenesis, polarity, adhesion and cytoskeletal organization in the lens. This Mus musculus (Mouse) protein is Signal-induced proliferation-associated 1-like protein 3 (Sipa1l3).